A 401-amino-acid polypeptide reads, in one-letter code: 4-hydroxy-3-methylbut-2-enyl diphosphate reductase (401 aa).

Cys66 is a [4Fe-4S] cluster binding site. His96 contacts (2E)-4-hydroxy-3-methylbut-2-enyl diphosphate. Residue His96 participates in dimethylallyl diphosphate binding. His96 contributes to the isopentenyl diphosphate binding site. Position 157 (Cys157) interacts with [4Fe-4S] cluster. His185 contacts (2E)-4-hydroxy-3-methylbut-2-enyl diphosphate. His185 contributes to the dimethylallyl diphosphate binding site. An isopentenyl diphosphate-binding site is contributed by His185. Glu187 (proton donor) is an active-site residue. A (2E)-4-hydroxy-3-methylbut-2-enyl diphosphate-binding site is contributed by Thr250. Cys288 contributes to the [4Fe-4S] cluster binding site. 4 residues coordinate (2E)-4-hydroxy-3-methylbut-2-enyl diphosphate: Ser317, Ser318, Asn319, and Ser379. Dimethylallyl diphosphate contacts are provided by Ser317, Ser318, Asn319, and Ser379. 4 residues coordinate isopentenyl diphosphate: Ser317, Ser318, Asn319, and Ser379.

This sequence belongs to the IspH family. Requires [4Fe-4S] cluster as cofactor.

It catalyses the reaction isopentenyl diphosphate + 2 oxidized [2Fe-2S]-[ferredoxin] + H2O = (2E)-4-hydroxy-3-methylbut-2-enyl diphosphate + 2 reduced [2Fe-2S]-[ferredoxin] + 2 H(+). The catalysed reaction is dimethylallyl diphosphate + 2 oxidized [2Fe-2S]-[ferredoxin] + H2O = (2E)-4-hydroxy-3-methylbut-2-enyl diphosphate + 2 reduced [2Fe-2S]-[ferredoxin] + 2 H(+). It participates in isoprenoid biosynthesis; dimethylallyl diphosphate biosynthesis; dimethylallyl diphosphate from (2E)-4-hydroxy-3-methylbutenyl diphosphate: step 1/1. The protein operates within isoprenoid biosynthesis; isopentenyl diphosphate biosynthesis via DXP pathway; isopentenyl diphosphate from 1-deoxy-D-xylulose 5-phosphate: step 6/6. Functionally, catalyzes the conversion of 1-hydroxy-2-methyl-2-(E)-butenyl 4-diphosphate (HMBPP) into a mixture of isopentenyl diphosphate (IPP) and dimethylallyl diphosphate (DMAPP). Acts in the terminal step of the DOXP/MEP pathway for isoprenoid precursor biosynthesis. The protein is 4-hydroxy-3-methylbut-2-enyl diphosphate reductase of Trichodesmium erythraeum (strain IMS101).